Here is a 278-residue protein sequence, read N- to C-terminus: Potassium/proton antiporter CemA (278 aa).

4 helical membrane passes run 61 to 81, 154 to 174, 203 to 223, and 238 to 258; these read VVFL…FLFG, CAIT…SILI, IILF…EVII, and FIFV…KYWI.

The protein belongs to the CemA family.

It is found in the plastid. It localises to the chloroplast inner membrane. It catalyses the reaction K(+)(in) + H(+)(out) = K(+)(out) + H(+)(in). Contributes to K(+)/H(+) antiport activity by supporting proton efflux to control proton extrusion and homeostasis in chloroplasts in a light-dependent manner to modulate photosynthesis. Prevents excessive induction of non-photochemical quenching (NPQ) under continuous-light conditions. Indirectly promotes efficient inorganic carbon uptake into chloroplasts. The protein is Potassium/proton antiporter CemA of Gracilaria tenuistipitata var. liui (Red alga).